The primary structure comprises 95 residues: Aspartyl/glutamyl-tRNA(Asn/Gln) amidotransferase subunit C (95 aa).

It belongs to the GatC family. As to quaternary structure, heterotrimer of A, B and C subunits.

It carries out the reaction L-glutamyl-tRNA(Gln) + L-glutamine + ATP + H2O = L-glutaminyl-tRNA(Gln) + L-glutamate + ADP + phosphate + H(+). The catalysed reaction is L-aspartyl-tRNA(Asn) + L-glutamine + ATP + H2O = L-asparaginyl-tRNA(Asn) + L-glutamate + ADP + phosphate + 2 H(+). Allows the formation of correctly charged Asn-tRNA(Asn) or Gln-tRNA(Gln) through the transamidation of misacylated Asp-tRNA(Asn) or Glu-tRNA(Gln) in organisms which lack either or both of asparaginyl-tRNA or glutaminyl-tRNA synthetases. The reaction takes place in the presence of glutamine and ATP through an activated phospho-Asp-tRNA(Asn) or phospho-Glu-tRNA(Gln). The protein is Aspartyl/glutamyl-tRNA(Asn/Gln) amidotransferase subunit C of Campylobacter concisus (strain 13826).